Reading from the N-terminus, the 378-residue chain is MSHLDNGFRSLTLQRFPATDDVNPLQAWEAADEYLLQQLDDTEIRGPVLILNDAFGALSCALAEHKPYSIGDSYISELATRENLRLNGIDESSVKFLDSTADYPQQPGVVLIKVPKTLALLEQQLRALRKVVTPDTRIIAGAKARDIHTSTLELFEKVLGPTTTTLAWKKARLINCTFNEPPLADAPQTVSWKLEGTDWTIHNHANVFSRTGLDIGARFFMQHLPENLEGEIVDLGCGNGVIGLTLLDKNPQAKVVFVDESPMAVASSRLNVETNMPEALDRCEFMINNALSGVEPFRFNAVLCNPPFHQQHALTDNVAWEMFHHARRCLKINGELYIVANRHLDYFHKLKKIFGNCTTIATNNKFVVLKAVKLGRRR.

Belongs to the methyltransferase superfamily. RlmG family.

The protein resides in the cytoplasm. The enzyme catalyses guanosine(1835) in 23S rRNA + S-adenosyl-L-methionine = N(2)-methylguanosine(1835) in 23S rRNA + S-adenosyl-L-homocysteine + H(+). Its function is as follows. Specifically methylates the guanine in position 1835 (m2G1835) of 23S rRNA. The protein is Ribosomal RNA large subunit methyltransferase G of Escherichia coli O1:K1 / APEC.